The chain runs to 195 residues: Small ribosomal subunit protein uS4c (195 aa).

An S4 RNA-binding domain is found at 82 to 143 (MRLDNILFRL…KQRSKALIQN (62 aa)).

It belongs to the universal ribosomal protein uS4 family. In terms of assembly, part of the 30S ribosomal subunit. Contacts protein S5. The interaction surface between S4 and S5 is involved in control of translational fidelity.

Its subcellular location is the plastid. It localises to the chloroplast. One of the primary rRNA binding proteins, it binds directly to 16S rRNA where it nucleates assembly of the body of the 30S subunit. Functionally, with S5 and S12 plays an important role in translational accuracy. The chain is Small ribosomal subunit protein uS4c (rps4) from Watsonia angusta.